Reading from the N-terminus, the 957-residue chain is Glycine dehydrogenase (decarboxylating) (957 aa).

The residue at position 708 (lysine 708) is an N6-(pyridoxal phosphate)lysine.

This sequence belongs to the GcvP family. The glycine cleavage system is composed of four proteins: P, T, L and H. It depends on pyridoxal 5'-phosphate as a cofactor.

The enzyme catalyses N(6)-[(R)-lipoyl]-L-lysyl-[glycine-cleavage complex H protein] + glycine + H(+) = N(6)-[(R)-S(8)-aminomethyldihydrolipoyl]-L-lysyl-[glycine-cleavage complex H protein] + CO2. In terms of biological role, the glycine cleavage system catalyzes the degradation of glycine. The P protein binds the alpha-amino group of glycine through its pyridoxal phosphate cofactor; CO(2) is released and the remaining methylamine moiety is then transferred to the lipoamide cofactor of the H protein. In Enterobacter sp. (strain 638), this protein is Glycine dehydrogenase (decarboxylating).